Reading from the N-terminus, the 362-residue chain is 3-isopropylmalate dehydrogenase (362 aa).

Substrate contacts are provided by R97, R107, R135, and D225. Mg(2+) contacts are provided by D225, D249, and D253. Residue 283 to 295 (GSAPDIAHKNLAN) coordinates NAD(+).

Belongs to the isocitrate and isopropylmalate dehydrogenases family. LeuB type 1 subfamily. Homodimer. It depends on Mg(2+) as a cofactor. The cofactor is Mn(2+).

It is found in the cytoplasm. The catalysed reaction is (2R,3S)-3-isopropylmalate + NAD(+) = 4-methyl-2-oxopentanoate + CO2 + NADH. Its pathway is amino-acid biosynthesis; L-leucine biosynthesis; L-leucine from 3-methyl-2-oxobutanoate: step 3/4. Catalyzes the oxidation of 3-carboxy-2-hydroxy-4-methylpentanoate (3-isopropylmalate) to 3-carboxy-4-methyl-2-oxopentanoate. The product decarboxylates to 4-methyl-2 oxopentanoate. This is 3-isopropylmalate dehydrogenase from Prochlorococcus marinus (strain SARG / CCMP1375 / SS120).